A 502-amino-acid polypeptide reads, in one-letter code: MLSEMLGEIAALPMVSLLGAALIVVSVLGRRLLVSNIAWAITGQTPAKSLAKRSRLPGLPFKFPNGQGTEKFFGGRSAARRWRIQYGPIYAIWAGLKREVVLSTPEHVQAFYKDSHLHVKATDNNSGWLFAELLGSCVGVVSQGRWKRVRRPFEHPFSRPESLTRPKAFIHEARDYFAVLNPNIQELTINTSNDLKHCPFFMVASIFFGIHTTAQRDELKQLGPPREELFRHAFMGGMNRYAITKYLPGSALALLRQFQGKWEGFVKAAYNRSIQTGDGTIVPLFEAVNRGEMSMQELLQTLDESLFANLDVTAHAVSWNVIRIAHHQDIQQKVRIEIQANNNSEKSYENYVCRDDTLLAACVLETSRLHPVLPFSNPEAAEEDKIVGGYIIPQTDVIVDTHAINIDNPHWVDSNSFDPHRHLGQKDSSRRYNMWRFGFGPRQCLGKNVADIILRIILCEMLNTYELGLLEEEGITGVKLQPDSWIGLPNGVVQMTPLKLDE.

Residues 9–29 traverse the membrane as a helical segment; sequence IAALPMVSLLGAALIVVSVLG. Residues Asn124, Asn190, Asn271, and Asn342 are each glycosylated (N-linked (GlcNAc...) asparagine). A heme-binding site is contributed by Cys444.

The protein belongs to the cytochrome P450 family. The cofactor is heme.

Its subcellular location is the membrane. The protein operates within mycotoxin biosynthesis. Its function is as follows. Cytochrome P450 monooxygenase; part of the gene cluster that mediates the biosynthesis of 11'-deoxyverticillin A, one of the dimeric epipolythiodioxopiperazines (ETPs) from the verticillin family that act as mycotoxins. 11'-deoxyverticillin A is required for normal conidiation. The nonribosomal peptide synthetase verP is speculated to be responsible for condensation of amino acids to form the carbon skeleton of verticillin, whereas the cluster-specific tailoring enzymes are involved in further modifications leading to the production of 11'-deoxyverticillin A. In Clonostachys rogersoniana, this protein is Cytochrome P450 monooxygenase verC.